The sequence spans 208 residues: ATP-dependent Clp protease proteolytic subunit 1 (208 aa).

S108 (nucleophile) is an active-site residue. Residue H133 is part of the active site.

The protein belongs to the peptidase S14 family. In terms of assembly, fourteen ClpP subunits assemble into 2 heptameric rings which stack back to back to give a disk-like structure with a central cavity, resembling the structure of eukaryotic proteasomes.

The protein localises to the cytoplasm. It carries out the reaction Hydrolysis of proteins to small peptides in the presence of ATP and magnesium. alpha-casein is the usual test substrate. In the absence of ATP, only oligopeptides shorter than five residues are hydrolyzed (such as succinyl-Leu-Tyr-|-NHMec, and Leu-Tyr-Leu-|-Tyr-Trp, in which cleavage of the -Tyr-|-Leu- and -Tyr-|-Trp bonds also occurs).. In terms of biological role, cleaves peptides in various proteins in a process that requires ATP hydrolysis. Has a chymotrypsin-like activity. Plays a major role in the degradation of misfolded proteins. This is ATP-dependent Clp protease proteolytic subunit 1 from Corynebacterium glutamicum (strain ATCC 13032 / DSM 20300 / JCM 1318 / BCRC 11384 / CCUG 27702 / LMG 3730 / NBRC 12168 / NCIMB 10025 / NRRL B-2784 / 534).